The primary structure comprises 312 residues: Short-chain dehydrogenase/reductase pkfC (312 aa).

Residues Lys56, Asn108, and Lys140 each contribute to the NADP(+) site. Catalysis depends on Ser164, which acts as the Proton donor. Tyr193 and Lys197 together coordinate NADP(+). Tyr193 functions as the Proton acceptor in the catalytic mechanism. Lys197 acts as the Lowers pKa of active site Tyr in catalysis.

This sequence belongs to the short-chain dehydrogenases/reductases (SDR) family.

It participates in secondary metabolite biosynthesis. Its function is as follows. Short-chain dehydrogenase/reductase; part of the gene cluster that mediates the biosynthesis of aspernidine A, a prenylated isoindolinone. The starting point of the biosynthesis of aspernidin A is the production of orsellinaldehyde by the non-reducing polyketide synthase pkfA. Hydroxylation, methylation of one of the phenol groups, and prenylation, presumably catalyzed by the prenyltransferase pkfE, would be needed to yield aspernidine D. Subsequently, the cytochrome P450 monooxygenase pkfB is responsible for hydroxylation of aspernidine D to yield aspernidine E. The dehydrogenase pkfF may be responsible for further oxidation of aspernidine E to form a dialdehyde intermediate which is further transformed in a series of steps, some of which are enzyme-mediated, to generate aspernidine A. The possibility that additional enzymes outside of the cluster are involved in aspernidine A biosynthesis cannot be excluded. This Emericella nidulans (strain FGSC A4 / ATCC 38163 / CBS 112.46 / NRRL 194 / M139) (Aspergillus nidulans) protein is Short-chain dehydrogenase/reductase pkfC.